A 427-amino-acid polypeptide reads, in one-letter code: Adenylosuccinate synthetase (427 aa).

GTP-binding positions include 12–18 (GDEGKGK) and 40–42 (GHT). The Proton acceptor role is filled by D13. Mg(2+) is bound by residues D13 and G40. IMP contacts are provided by residues 13-16 (DEGK), 38-41 (NAGH), T128, R142, Q223, T238, and R302. H41 serves as the catalytic Proton donor. 298–304 (TTTGRPR) is a binding site for substrate. GTP contacts are provided by residues R304, 330–332 (LLD), and 412–414 (SVG).

The protein belongs to the adenylosuccinate synthetase family. Homodimer. Mg(2+) serves as cofactor.

Its subcellular location is the cytoplasm. The catalysed reaction is IMP + L-aspartate + GTP = N(6)-(1,2-dicarboxyethyl)-AMP + GDP + phosphate + 2 H(+). The protein operates within purine metabolism; AMP biosynthesis via de novo pathway; AMP from IMP: step 1/2. In terms of biological role, plays an important role in the de novo pathway of purine nucleotide biosynthesis. Catalyzes the first committed step in the biosynthesis of AMP from IMP. This chain is Adenylosuccinate synthetase, found in Alkaliphilus metalliredigens (strain QYMF).